Here is a 514-residue protein sequence, read N- to C-terminus: ATP synthase subunit alpha (514 aa).

ATP is bound at residue 170–177; sequence GDRQTGKT.

Belongs to the ATPase alpha/beta chains family. F-type ATPases have 2 components, CF(1) - the catalytic core - and CF(0) - the membrane proton channel. CF(1) has five subunits: alpha(3), beta(3), gamma(1), delta(1), epsilon(1). CF(0) has three main subunits: a(1), b(2) and c(9-12). The alpha and beta chains form an alternating ring which encloses part of the gamma chain. CF(1) is attached to CF(0) by a central stalk formed by the gamma and epsilon chains, while a peripheral stalk is formed by the delta and b chains.

The protein resides in the cell inner membrane. It carries out the reaction ATP + H2O + 4 H(+)(in) = ADP + phosphate + 5 H(+)(out). Produces ATP from ADP in the presence of a proton gradient across the membrane. The alpha chain is a regulatory subunit. The protein is ATP synthase subunit alpha of Acidithiobacillus ferrooxidans (strain ATCC 23270 / DSM 14882 / CIP 104768 / NCIMB 8455) (Ferrobacillus ferrooxidans (strain ATCC 23270)).